Here is a 462-residue protein sequence, read N- to C-terminus: Cysteine--tRNA ligase (462 aa).

Zn(2+) is bound at residue Cys-30. The 'HIGH' region signature appears at 32–42 (MTVYDYCHVGH). Zn(2+) is bound by residues Cys-214, His-239, and Glu-243. The 'KMSKS' region signature appears at 271–275 (KMSKS). Residue Lys-274 participates in ATP binding.

This sequence belongs to the class-I aminoacyl-tRNA synthetase family. As to quaternary structure, monomer. It depends on Zn(2+) as a cofactor.

It localises to the cytoplasm. It carries out the reaction tRNA(Cys) + L-cysteine + ATP = L-cysteinyl-tRNA(Cys) + AMP + diphosphate. This is Cysteine--tRNA ligase from Cupriavidus necator (strain ATCC 17699 / DSM 428 / KCTC 22496 / NCIMB 10442 / H16 / Stanier 337) (Ralstonia eutropha).